We begin with the raw amino-acid sequence, 428 residues long: Serine--tRNA ligase (428 aa).

L-serine is bound at residue 236–238; it reads TAE. An ATP-binding site is contributed by 267 to 269; it reads RSE. E290 contributes to the L-serine binding site. ATP is bound at residue 354–357; that stretch reads EISS. S388 contacts L-serine.

Belongs to the class-II aminoacyl-tRNA synthetase family. Type-1 seryl-tRNA synthetase subfamily. As to quaternary structure, homodimer. The tRNA molecule binds across the dimer.

The protein resides in the cytoplasm. The enzyme catalyses tRNA(Ser) + L-serine + ATP = L-seryl-tRNA(Ser) + AMP + diphosphate + H(+). The catalysed reaction is tRNA(Sec) + L-serine + ATP = L-seryl-tRNA(Sec) + AMP + diphosphate + H(+). It functions in the pathway aminoacyl-tRNA biosynthesis; selenocysteinyl-tRNA(Sec) biosynthesis; L-seryl-tRNA(Sec) from L-serine and tRNA(Sec): step 1/1. Functionally, catalyzes the attachment of serine to tRNA(Ser). Is also able to aminoacylate tRNA(Sec) with serine, to form the misacylated tRNA L-seryl-tRNA(Sec), which will be further converted into selenocysteinyl-tRNA(Sec). The chain is Serine--tRNA ligase from Psychrobacter cryohalolentis (strain ATCC BAA-1226 / DSM 17306 / VKM B-2378 / K5).